The sequence spans 314 residues: Olfactory receptor 5P51 (314 aa).

The Extracellular segment spans residues 1–28 (MAFLEDGNHTAVTEFVLFGLTDDPVLRV). Residue N8 is glycosylated (N-linked (GlcNAc...) asparagine). The helical transmembrane segment at 29–49 (ILFIIFLCIYLVNVSGNLSTI) threads the bilayer. Residues 50–57 (LLIRVSSQ) lie on the Cytoplasmic side of the membrane. A helical membrane pass occupies residues 58-78 (LHHPMYFFLSHLASVDVGYSS). At 79–102 (TVTPKMLANFLLERSTISYLGCTI) the chain is on the extracellular side. A disulfide bridge links C100 with C192. Residues 103–123 (QLFSGAFVGTLECFLLATMAY) traverse the membrane as a helical segment. Residues 124–136 (DRFIAICNPLLYS) lie on the Cytoplasmic side of the membrane. A helical transmembrane segment spans residues 137–157 (TKMSTQVCIQLLVGSYIGGFL). Residues 158–199 (NASSFLLSFFPLLFCGPNRVNHYSCDLTPLIELSCSGSNVPI) lie on the Extracellular side of the membrane. Residues 200–220 (VPASFCSAFVIIVTVSVIAIS) traverse the membrane as a helical segment. At 221 to 240 (YTYILITILKMRSTEGRQKA) the chain is on the cytoplasmic side. A helical transmembrane segment spans residues 241 to 261 (FSTCTSHLTAVTLYYGTVTFI). Residues 262-274 (YVMPKSSYSTDQN) are Extracellular-facing. A helical transmembrane segment spans residues 275–295 (KVVSVFYTVVIPMLNPIIYSL). Over 296-314 (RNNEIKGALKRQLARKIFS) the chain is Cytoplasmic.

Belongs to the G-protein coupled receptor 1 family.

It is found in the cell membrane. Potential odorant receptor. This chain is Olfactory receptor 5P51, found in Mus musculus (Mouse).